The chain runs to 278 residues: Thiazole synthase (278 aa).

Lys109 serves as the catalytic Schiff-base intermediate with DXP. Residues Gly170, 197–198 (AG), and 219–220 (NT) contribute to the 1-deoxy-D-xylulose 5-phosphate site.

The protein belongs to the ThiG family. In terms of assembly, homotetramer. Forms heterodimers with either ThiH or ThiS.

It is found in the cytoplasm. The enzyme catalyses [ThiS sulfur-carrier protein]-C-terminal-Gly-aminoethanethioate + 2-iminoacetate + 1-deoxy-D-xylulose 5-phosphate = [ThiS sulfur-carrier protein]-C-terminal Gly-Gly + 2-[(2R,5Z)-2-carboxy-4-methylthiazol-5(2H)-ylidene]ethyl phosphate + 2 H2O + H(+). Its pathway is cofactor biosynthesis; thiamine diphosphate biosynthesis. In terms of biological role, catalyzes the rearrangement of 1-deoxy-D-xylulose 5-phosphate (DXP) to produce the thiazole phosphate moiety of thiamine. Sulfur is provided by the thiocarboxylate moiety of the carrier protein ThiS. In vitro, sulfur can be provided by H(2)S. The chain is Thiazole synthase from Cupriavidus taiwanensis (strain DSM 17343 / BCRC 17206 / CCUG 44338 / CIP 107171 / LMG 19424 / R1) (Ralstonia taiwanensis (strain LMG 19424)).